We begin with the raw amino-acid sequence, 224 residues long: 7-cyano-7-deazaguanine synthase (224 aa).

An ATP-binding site is contributed by 12-22; sequence LSGGLDSSTVT. Positions 193, 201, 204, and 207 each coordinate Zn(2+).

Belongs to the QueC family. Zn(2+) is required as a cofactor.

The enzyme catalyses 7-carboxy-7-deazaguanine + NH4(+) + ATP = 7-cyano-7-deazaguanine + ADP + phosphate + H2O + H(+). It functions in the pathway purine metabolism; 7-cyano-7-deazaguanine biosynthesis. Functionally, catalyzes the ATP-dependent conversion of 7-carboxy-7-deazaguanine (CDG) to 7-cyano-7-deazaguanine (preQ(0)). This chain is 7-cyano-7-deazaguanine synthase, found in Prochlorococcus marinus subsp. pastoris (strain CCMP1986 / NIES-2087 / MED4).